The sequence spans 424 residues: Probable biofilm formation methyltransferase WspC (424 aa).

The CheR-type methyltransferase domain maps to 1 to 263; the sequence is MNEQRFFRFL…IAQSFAYVRH (263 aa). S-adenosyl-L-methionine is bound by residues threonine 68, arginine 72, glutamate 109, aspartate 133, 187–188, and 206–207; these read NV and RN. The stretch at 355-388 is one TPR repeat; it reads AQVYYWLGLLSDTEGDAQQALSHYRKALYLEPQH.

Monomer. The TPR repeat does not mediate self-association.

Functionally, involved in biofilm formation. In Pseudomonas putida (strain ATCC 47054 / DSM 6125 / CFBP 8728 / NCIMB 11950 / KT2440), this protein is Probable biofilm formation methyltransferase WspC (wspC).